A 452-amino-acid polypeptide reads, in one-letter code: GTPase Der (452 aa).

EngA-type G domains are found at residues 4–169 and 177–352; these read PIVA…PTTE and IKVA…ASHR. GTP-binding positions include 10–17, 57–61, 120–123, 183–190, 230–234, and 295–298; these read GRPNVGKS, DTGGL, NKCE, DTAGI, and NKWD. Residues 353-438 enclose the KH-like domain; sequence RRVSTAVINE…PIRLIWRGKS (86 aa).

This sequence belongs to the TRAFAC class TrmE-Era-EngA-EngB-Septin-like GTPase superfamily. EngA (Der) GTPase family. Associates with the 50S ribosomal subunit.

GTPase that plays an essential role in the late steps of ribosome biogenesis. This chain is GTPase Der, found in Gloeothece citriformis (strain PCC 7424) (Cyanothece sp. (strain PCC 7424)).